The following is a 125-amino-acid chain: Putative zinc finger A20 and AN1 domain-containing stress-associated protein 8 (125 aa).

The A20-type zinc-finger motif lies at 2-36; sequence TGEPSLCIRGCGFFSTSQTKNLCSKCYNDFLKDES. Positions 8, 12, 24, 27, 80, 82, 96, and 98 each coordinate Zn(2+). Residues 61–106 form an AN1-type; degenerate zinc finger; the sequence is LGSKGGCACKKKVGLLGFHCRCGHLFFASHRYPEEHSCPSDYKSAA.

Functionally, may be involved in environmental stress response. This chain is Putative zinc finger A20 and AN1 domain-containing stress-associated protein 8 (SAP8), found in Arabidopsis thaliana (Mouse-ear cress).